We begin with the raw amino-acid sequence, 135 residues long: Small ribosomal subunit protein uS8 (135 aa).

This sequence belongs to the universal ribosomal protein uS8 family. As to quaternary structure, part of the 30S ribosomal subunit. Contacts proteins S5 and S12.

One of the primary rRNA binding proteins, it binds directly to 16S rRNA central domain where it helps coordinate assembly of the platform of the 30S subunit. The polypeptide is Small ribosomal subunit protein uS8 (Corynebacterium urealyticum (strain ATCC 43042 / DSM 7109)).